We begin with the raw amino-acid sequence, 297 residues long: SH2 domain-containing protein 6 (297 aa).

Disordered regions lie at residues 1-61 (MSCP…FPTR) and 74-93 (MNPQ…RGTS). The span at 36–45 (PSKPPLPPPQ) shows a compositional bias: pro residues. The region spanning 187–295 (WYSGNCDRQS…RGLTYLRFPT (109 aa)) is the SH2 domain.

This is SH2 domain-containing protein 6 (Sh2d6) from Mus musculus (Mouse).